The chain runs to 468 residues: uncharacterized protein (468 aa).

Positions 447–468 (AVHVSNGDKPKVALPDTQLGSH) are disordered.

This sequence belongs to the mycobacterial PPE family.

This is an uncharacterized protein from Mycobacterium tuberculosis (strain CDC 1551 / Oshkosh).